Consider the following 559-residue polypeptide: Hepatocyte nuclear factor 1-beta (559 aa).

A dimerization region spans residues 1–31 (MVSKLTSLQQELLSALLSSGVTKEVLVQALE). The region spanning 1–32 (MVSKLTSLQQELLSALLSSGVTKEVLVQALEE) is the HNF-p1 domain. A phosphoserine mark is found at serine 49, serine 52, serine 75, and serine 80. The 96-residue stretch at 93 to 188 (KELQALNTEE…ILRQFNQTVQ (96 aa)) folds into the POU-specific atypical domain. The segment at residues 231 to 312 (MRRNRFKWGP…RRKEEEAFRQ (82 aa)) is a DNA-binding region (homeobox; HNF1-type). The segment covering 328–341 (NTLLSHSSPHHQPS) has biased composition (low complexity). The tract at residues 328–371 (NTLLSHSSPHHQPSTSPPNKLPGVRYNQQGNNEVTSSSTISHHG) is disordered. Over residues 353–371 (YNQQGNNEVTSSSTISHHG) the composition is skewed to polar residues.

It belongs to the HNF1 homeobox family. As to quaternary structure, binds DNA as a dimer. Can form homodimer or heterodimer with HNF1-alpha. Interacts (via HNF-p1 domain) with PCBD1; the interaction increases its transactivation activity.

The protein resides in the nucleus. Transcription factor that binds to the inverted palindrome 5'-GTTAATNATTAAC-3'. Binds to the FPC element in the cAMP regulatory unit of the PLAU gene. Transcriptional activity is increased by coactivator PCBD1. The sequence is that of Hepatocyte nuclear factor 1-beta (HNF1B) from Sus scrofa (Pig).